Reading from the N-terminus, the 211-residue chain is Peptide methionine sulfoxide reductase MsrA (211 aa).

Cys52 is an active-site residue.

The protein belongs to the MsrA Met sulfoxide reductase family.

It catalyses the reaction L-methionyl-[protein] + [thioredoxin]-disulfide + H2O = L-methionyl-(S)-S-oxide-[protein] + [thioredoxin]-dithiol. The enzyme catalyses [thioredoxin]-disulfide + L-methionine + H2O = L-methionine (S)-S-oxide + [thioredoxin]-dithiol. Its function is as follows. Has an important function as a repair enzyme for proteins that have been inactivated by oxidation. Catalyzes the reversible oxidation-reduction of methionine sulfoxide in proteins to methionine. This Klebsiella pneumoniae (strain 342) protein is Peptide methionine sulfoxide reductase MsrA.